We begin with the raw amino-acid sequence, 212 residues long: Spore germination lipase LipC (212 aa).

Serine 11 acts as the Nucleophile in catalysis. The substrate site is built by glycine 50 and asparagine 82. Active-site residues include aspartate 186 and histidine 189.

Belongs to the 'GDSL' lipolytic enzyme family.

Its subcellular location is the spore coat. Lipase involved in spore germination. This chain is Spore germination lipase LipC (lipC), found in Bacillus licheniformis (strain ATCC 14580 / DSM 13 / JCM 2505 / CCUG 7422 / NBRC 12200 / NCIMB 9375 / NCTC 10341 / NRRL NRS-1264 / Gibson 46).